Here is a 284-residue protein sequence, read N- to C-terminus: Probable protein phosphatase 2C 41 (284 aa).

The PPM-type phosphatase domain occupies 35–282; sequence SYGFYLVRGM…DDISCVVVRF (248 aa). Mn(2+) contacts are provided by D72, G73, D234, and D273.

The protein belongs to the PP2C family. The cofactor is Mg(2+). Mn(2+) serves as cofactor.

The enzyme catalyses O-phospho-L-seryl-[protein] + H2O = L-seryl-[protein] + phosphate. It catalyses the reaction O-phospho-L-threonyl-[protein] + H2O = L-threonyl-[protein] + phosphate. The protein is Probable protein phosphatase 2C 41 of Oryza sativa subsp. japonica (Rice).